The following is a 577-amino-acid chain: Hemagglutinin-neuraminidase (577 aa).

Topologically, residues 1 to 26 are intravirion; it reads MDRAVSQVALENDEREAKNTWRLIFR. The helical transmembrane segment at 27-47 threads the bilayer; the sequence is IAILFLTVVTLAISVASLLYS. At 48-577 the chain is on the virion surface side; it reads MGASTPSDLV…DDGVREARSG (530 aa). The interval 124–152 is important for interaction with fusion/F protein; that stretch reads GAPIHDPDYIGGIGKELIVDDASDVTSFY. 4 N-linked (GlcNAc...) asparagine; by host glycosylation sites follow: Asn-341, Asn-433, Asn-481, and Asn-538.

It belongs to the paramyxoviruses hemagglutinin-neuraminidase family. As to quaternary structure, homotetramer; composed of disulfide-linked homodimers. Interacts with F protein trimer. Interacts with host CG-1B; this interaction inhibits viral adsorption and replication rather than internalization.

It is found in the virion membrane. The protein localises to the host cell membrane. It catalyses the reaction Hydrolysis of alpha-(2-&gt;3)-, alpha-(2-&gt;6)-, alpha-(2-&gt;8)- glycosidic linkages of terminal sialic acid residues in oligosaccharides, glycoproteins, glycolipids, colominic acid and synthetic substrates.. In terms of biological role, mediates the viral entry into the host cell together with fusion/F protein. Attaches the virus to sialic acid-containing cell receptors and thereby initiates infection. Binding of HN protein to the receptor induces a conformational change that allows the F protein to trigger virion/cell membranes fusion. Neuraminidase activity ensures the efficient spread of the virus by dissociating the mature virions from the neuraminic acid containing glycoproteins. This Gallus gallus (Chicken) protein is Hemagglutinin-neuraminidase (HN).